We begin with the raw amino-acid sequence, 224 residues long: Large ribosomal subunit protein uL1m (224 aa).

It belongs to the universal ribosomal protein uL1 family.

The protein resides in the mitochondrion. The sequence is that of Large ribosomal subunit protein uL1m (RPL1) from Reclinomonas americana.